Reading from the N-terminus, the 440-residue chain is Chromosomal replication initiator protein DnaA (440 aa).

The tract at residues 1 to 69 (MKERILQEIK…VKVVLGNDAT (69 aa)) is domain I, interacts with DnaA modulators. The domain II stretch occupies residues 69 to 96 (TFEITYEAFEPHSSYSEPLVKKRAVLLT). The tract at residues 97–313 (PLNPDYTFEN…GAIIKLLVYK (217 aa)) is domain III, AAA+ region. Residues Val108, Asn113, Gly140, Leu141, Gly142, Lys143, Thr144, His145, and Arg300 each contribute to the ADP site. Gly140 lines the ATP pocket. ATP contacts are provided by Gly142, Lys143, and Thr144. Mg(2+) is bound at residue Thr144. The domain IV, binds dsDNA stretch occupies residues 314–440 (ETTGKEVDLK…GEISRRALSG (127 aa)).

Belongs to the DnaA family. In terms of assembly, oligomerizes as a right-handed, spiral filament on DNA at oriC.

The protein localises to the cytoplasm. Its function is as follows. Plays an essential role in the initiation and regulation of chromosomal replication. ATP-DnaA binds to the origin of replication (oriC) to initiate formation of the DNA replication initiation complex once per cell cycle. Binds the DnaA box (a 9 base pair repeat at the origin) and separates the double-stranded (ds)DNA. Forms a right-handed helical filament on oriC DNA; dsDNA binds to the exterior of the filament while single-stranded (ss)DNA is stabiized in the filament's interior. The ATP-DnaA-oriC complex binds and stabilizes one strand of the AT-rich DNA unwinding element (DUE), permitting loading of DNA polymerase. After initiation quickly degrades to an ADP-DnaA complex that is not apt for DNA replication. Binds acidic phospholipids. Functionally, the DnaA box consensus is 5'-[ATC][AT]AC[CT]TACCA[CT][CTA]-3' in this bacterium. Mutagenesis of residues that line the central pore blocks dsDNA separation. The polypeptide is Chromosomal replication initiator protein DnaA (Thermotoga maritima (strain ATCC 43589 / DSM 3109 / JCM 10099 / NBRC 100826 / MSB8)).